The sequence spans 521 residues: Bifunctional purine biosynthesis protein PurH (521 aa).

Residues 1–149 form the MGS-like domain; that stretch reads MSDPVIKRAL…KNNESVTVVT (149 aa).

It belongs to the PurH family.

The catalysed reaction is (6R)-10-formyltetrahydrofolate + 5-amino-1-(5-phospho-beta-D-ribosyl)imidazole-4-carboxamide = 5-formamido-1-(5-phospho-D-ribosyl)imidazole-4-carboxamide + (6S)-5,6,7,8-tetrahydrofolate. The enzyme catalyses IMP + H2O = 5-formamido-1-(5-phospho-D-ribosyl)imidazole-4-carboxamide. Its pathway is purine metabolism; IMP biosynthesis via de novo pathway; 5-formamido-1-(5-phospho-D-ribosyl)imidazole-4-carboxamide from 5-amino-1-(5-phospho-D-ribosyl)imidazole-4-carboxamide (10-formyl THF route): step 1/1. It participates in purine metabolism; IMP biosynthesis via de novo pathway; IMP from 5-formamido-1-(5-phospho-D-ribosyl)imidazole-4-carboxamide: step 1/1. The sequence is that of Bifunctional purine biosynthesis protein PurH from Chlorobium phaeobacteroides (strain DSM 266 / SMG 266 / 2430).